The primary structure comprises 178 residues: dCTP deaminase (178 aa).

Residues 99-104 (RSTWAR) and D115 each bind dCTP. E125 serves as the catalytic Proton donor/acceptor. DCTP contacts are provided by Y157 and Q164.

It belongs to the dCTP deaminase family. In terms of assembly, homotrimer.

The enzyme catalyses dCTP + H2O + H(+) = dUTP + NH4(+). It participates in pyrimidine metabolism; dUMP biosynthesis; dUMP from dCTP (dUTP route): step 1/2. Catalyzes the deamination of dCTP to dUTP. The sequence is that of dCTP deaminase from Aeropyrum pernix (strain ATCC 700893 / DSM 11879 / JCM 9820 / NBRC 100138 / K1).